The chain runs to 179 residues: Large ribosomal subunit protein uL6 (179 aa).

It belongs to the universal ribosomal protein uL6 family. Part of the 50S ribosomal subunit.

Functionally, this protein binds to the 23S rRNA, and is important in its secondary structure. It is located near the subunit interface in the base of the L7/L12 stalk, and near the tRNA binding site of the peptidyltransferase center. The protein is Large ribosomal subunit protein uL6 of Geobacter metallireducens (strain ATCC 53774 / DSM 7210 / GS-15).